Consider the following 267-residue polypeptide: uncharacterized protein (267 aa).

It belongs to the glycosyltransferase 2 family.

This is an uncharacterized protein from Haemophilus influenzae (strain ATCC 51907 / DSM 11121 / KW20 / Rd).